A 287-amino-acid chain; its full sequence is 4-diphosphocytidyl-2-C-methyl-D-erythritol kinase (287 aa).

Lysine 10 is a catalytic residue. 94 to 104 (PVAAGLGGGSA) serves as a coordination point for ATP. Aspartate 136 is a catalytic residue.

Belongs to the GHMP kinase family. IspE subfamily.

The catalysed reaction is 4-CDP-2-C-methyl-D-erythritol + ATP = 4-CDP-2-C-methyl-D-erythritol 2-phosphate + ADP + H(+). The protein operates within isoprenoid biosynthesis; isopentenyl diphosphate biosynthesis via DXP pathway; isopentenyl diphosphate from 1-deoxy-D-xylulose 5-phosphate: step 3/6. Its function is as follows. Catalyzes the phosphorylation of the position 2 hydroxy group of 4-diphosphocytidyl-2C-methyl-D-erythritol. The sequence is that of 4-diphosphocytidyl-2-C-methyl-D-erythritol kinase from Pelotomaculum thermopropionicum (strain DSM 13744 / JCM 10971 / SI).